The chain runs to 351 residues: Rhodopsin (351 aa).

The Extracellular portion of the chain corresponds to 1–36 (MNGTEGPFFYIPMSNATGLVRSPYDYPQYYLVPPWG). N-linked (GlcNAc...) asparagine glycosylation is found at Asn2 and Asn15. Residues 37 to 61 (YACLAAYMFLLILTGFPVNFLTLYV) form a helical membrane-spanning segment. Residues 62-73 (TIEHKKLRSPLN) are Cytoplasmic-facing. The helical transmembrane segment at 74 to 96 (YILLNLAVADLFMVIGGFTTTMW) threads the bilayer. The Extracellular portion of the chain corresponds to 97–110 (TSLNGYFVFGRMGC). A disulfide bridge links Cys110 with Cys187. A helical transmembrane segment spans residues 111 to 133 (NIEGFFATLGGEIALWSLVVLSM). A 'Ionic lock' involved in activated form stabilization motif is present at residues 134–136 (ERW). Topologically, residues 134 to 152 (ERWIVVCKPISNFRFGENH) are cytoplasmic. Residues 153–173 (AVMGVAFSWFMAAACAVPPLV) form a helical membrane-spanning segment. Residues 174-202 (GWSRYIPEGMQCSCGIDYYTRAEGFNNES) are Extracellular-facing. An N-linked (GlcNAc...) asparagine glycan is attached at Asn200. Residues 203–224 (FVIYMFVVHFTCPLTIITFCYG) form a helical membrane-spanning segment. The Cytoplasmic portion of the chain corresponds to 225-252 (RLVCTVKEAAAQQQESETTQRAEREVTR). Residues 253-274 (MVIIMFVAFLACWVPYASVAWY) form a helical membrane-spanning segment. The Extracellular portion of the chain corresponds to 275–286 (IFTHQGSEFGPV). The helical transmembrane segment at 287–308 (FMTIPAFFAKSSAVYNPVIYIC) threads the bilayer. The residue at position 296 (Lys296) is an N6-(retinylidene)lysine. Residues 309–351 (LNKQFRHCMITTLCCGKNPFEEEEGSTTASKTEASSVCSVSPA) lie on the Cytoplasmic side of the membrane. S-palmitoyl cysteine attachment occurs at residues Cys322 and Cys323. Residues 330 to 351 (EEEGSTTASKTEASSVCSVSPA) form a disordered region. Polar residues predominate over residues 334–351 (STTASKTEASSVCSVSPA).

Belongs to the G-protein coupled receptor 1 family. Opsin subfamily. Post-translationally, phosphorylated on some or all of the serine and threonine residues present in the C-terminal region. Contains one covalently linked retinal chromophore.

The protein resides in the membrane. Its subcellular location is the cell projection. The protein localises to the cilium. It is found in the photoreceptor outer segment. Photoreceptor required for image-forming vision at low light intensity. While most salt water fish species use retinal as chromophore, most freshwater fish use 3-dehydroretinal, or a mixture of retinal and 3-dehydroretinal. Light-induced isomerization of 11-cis to all-trans retinal triggers a conformational change that activates signaling via G-proteins. Subsequent receptor phosphorylation mediates displacement of the bound G-protein alpha subunit by arrestin and terminates signaling. The sequence is that of Rhodopsin (rho) from Sardina pilchardus (European pilchard).